The sequence spans 335 residues: MIIAVDGMGGDFAPELVVEGCIQAVKEYEGIHIIITGKKELIKNELDKREYKGNKIEILNAEEVISTNEAPVKAIRRKKDSSMVKALELVKEGKAQAVISAGSTGALMAGATFVLGRIKGINRVCLAPLLPGAKAPFMIVDAGANVDCKAEYLVQFAMMGKVYFESVLGVKSPTVGLVNIGAEEEKGNELTKAAYKLLKDTDFNFIGNIEPRDIPRGEVNIAVCDGFIGNTVLKTYEGVASNLFSMLKDEMMASTRGKIGGALLKPVFKDFKKKFDYTEYGGSPFLGAKGICIKAHGSSDAKAFKNAIRQAKICYDKKIIEEIENNLGNLIENNI.

This sequence belongs to the PlsX family. Homodimer. Probably interacts with PlsY.

The protein localises to the cytoplasm. The enzyme catalyses a fatty acyl-[ACP] + phosphate = an acyl phosphate + holo-[ACP]. It functions in the pathway lipid metabolism; phospholipid metabolism. Functionally, catalyzes the reversible formation of acyl-phosphate (acyl-PO(4)) from acyl-[acyl-carrier-protein] (acyl-ACP). This enzyme utilizes acyl-ACP as fatty acyl donor, but not acyl-CoA. The protein is Phosphate acyltransferase of Clostridium botulinum (strain Loch Maree / Type A3).